We begin with the raw amino-acid sequence, 506 residues long: MGLPWYRVHTVVLNDPGRLLSVHIMHTALVAGWAGSMALYELAVFDPSDPVLDPMWRQGMFVIPFMTRLGITNSWGGWSITGGTITNPGIWSYEGVAGAHILFSGLCFLAAIWHWVYWDLEIFSDERTGKPSLDLPKIFGIHLFLSGLGCFGFGAFHVTGLYGPGIWVSDPYGLTGRVQAVNPAWGVEGFDPFVPGGIASHHIAAGTLGILAGLFHLSVRPPQRLYKGLRMGNIETVLSSSIAAVFFAAFVVAGTMWYGSATTPIELFGPTRYQWDQGYFQQEIYRRVSTGLAENQSLSEAWSKIPEKLAFYDYIGNNPAKGGLFRAGSMDNGDGIAVGWLGHPVFRDKEGRELFVRRMPTFFETFPVVLVDGDGIVRADVPFRRAESKYSVEQVGVTVEFYGGELNGVSYSDPATVKKYARRAQLGEIFELDRATLKSDGVFRSSPRGWFTFGHASFALLFFFGHIWHGARTLFRDVFAGIDPDLDTQVEFGAFQKLGDPTTKRV.

Helical transmembrane passes span S21–S36, I101–W115, G140–F156, I203–S218, V237–V252, and S457–R472.

This sequence belongs to the PsbB/PsbC family. PsbB subfamily. PSII is composed of 1 copy each of membrane proteins PsbA, PsbB, PsbC, PsbD, PsbE, PsbF, PsbH, PsbI, PsbJ, PsbK, PsbL, PsbM, PsbT, PsbX, PsbY, PsbZ, Psb30/Ycf12, at least 3 peripheral proteins of the oxygen-evolving complex and a large number of cofactors. It forms dimeric complexes. Requires Binds multiple chlorophylls. PSII binds additional chlorophylls, carotenoids and specific lipids. as cofactor.

The protein localises to the plastid. The protein resides in the chloroplast thylakoid membrane. Functionally, one of the components of the core complex of photosystem II (PSII). It binds chlorophyll and helps catalyze the primary light-induced photochemical processes of PSII. PSII is a light-driven water:plastoquinone oxidoreductase, using light energy to abstract electrons from H(2)O, generating O(2) and a proton gradient subsequently used for ATP formation. This Cucumis sativus (Cucumber) protein is Photosystem II CP47 reaction center protein.